The chain runs to 232 residues: 5'-methylthioadenosine/S-adenosylhomocysteine nucleosidase (232 aa).

Glu12 functions as the Proton acceptor in the catalytic mechanism. Substrate-binding positions include Gly78, Ile152, and Met173–Glu174. Catalysis depends on Asp197, which acts as the Proton donor.

This sequence belongs to the PNP/UDP phosphorylase family. MtnN subfamily. In terms of assembly, homodimer.

It catalyses the reaction S-adenosyl-L-homocysteine + H2O = S-(5-deoxy-D-ribos-5-yl)-L-homocysteine + adenine. The enzyme catalyses S-methyl-5'-thioadenosine + H2O = 5-(methylsulfanyl)-D-ribose + adenine. It carries out the reaction 5'-deoxyadenosine + H2O = 5-deoxy-D-ribose + adenine. It participates in amino-acid biosynthesis; L-methionine biosynthesis via salvage pathway; S-methyl-5-thio-alpha-D-ribose 1-phosphate from S-methyl-5'-thioadenosine (hydrolase route): step 1/2. In terms of biological role, catalyzes the irreversible cleavage of the glycosidic bond in both 5'-methylthioadenosine (MTA) and S-adenosylhomocysteine (SAH/AdoHcy) to adenine and the corresponding thioribose, 5'-methylthioribose and S-ribosylhomocysteine, respectively. Also cleaves 5'-deoxyadenosine, a toxic by-product of radical S-adenosylmethionine (SAM) enzymes, into 5-deoxyribose and adenine. Thus, is required for in vivo function of the radical SAM enzymes biotin synthase and lipoic acid synthase, that are inhibited by 5'-deoxyadenosine accumulation. This is 5'-methylthioadenosine/S-adenosylhomocysteine nucleosidase from Enterobacter sp. (strain 638).